Consider the following 64-residue polypeptide: Large ribosomal subunit protein bL35 (64 aa).

It belongs to the bacterial ribosomal protein bL35 family.

This is Large ribosomal subunit protein bL35 from Kineococcus radiotolerans (strain ATCC BAA-149 / DSM 14245 / SRS30216).